Reading from the N-terminus, the 311-residue chain is Mas-related G-protein coupled receptor member E (311 aa).

Topologically, residues 1 to 25 (MEPREAGQHAGAADGAQEDVAFNLV) are extracellular. A helical transmembrane segment spans residues 26–46 (ILSLTEGLGLGGLLGNGAVLW). Topologically, residues 47-63 (LLSSNVYRNPFAIYLLD) are cytoplasmic. The chain crosses the membrane as a helical span at residues 64-84 (VACADLIFLGCHMVAIIPDLL). Topologically, residues 85-95 (QGRLDFPGFVQ) are extracellular. Residues 96-116 (TSLATLRFFCYIVGLSLLVAV) traverse the membrane as a helical segment. The Cytoplasmic portion of the chain corresponds to 117 to 136 (SVEQCLAALFPAWYSCRRPR). The helical transmembrane segment at 137 to 157 (HLTTCVCALTWACCLLLHLLL) threads the bilayer. At 158 to 177 (SGACTQFFGEPSRHLCRTLW) the chain is on the extracellular side. The helical transmembrane segment at 178-198 (LVAAVLLAVLCCTMCGASLML) threads the bilayer. The Cytoplasmic portion of the chain corresponds to 199 to 216 (LLQVERGPQRPPPRGFPT). A helical membrane pass occupies residues 217–237 (LILLAVLLFLFCGLPFGIYWL). Topologically, residues 238-251 (SRNLLWHIPHYFYH) are extracellular. Residues 252 to 272 (FSFLTAAVYCAAKPVVYFCLG) traverse the membrane as a helical segment. At 273 to 311 (SAQGRRLPLRLVLQRALGDEAELGAVRETSRRGLVDIAA) the chain is on the cytoplasmic side.

The protein belongs to the G-protein coupled receptor 1 family. Mas subfamily.

The protein resides in the cell membrane. Orphan receptor. May regulate nociceptor function and/or development, including the sensation or modulation of pain. The protein is Mas-related G-protein coupled receptor member E (MRGPRE) of Macaca fascicularis (Crab-eating macaque).